We begin with the raw amino-acid sequence, 263 residues long: Receptor expression-enhancing protein 3-A (263 aa).

A run of 2 helical transmembrane segments spans residues 2–22 and 35–55; these read VSWI…PAYF and YVRW…EAIA. 2 disordered regions span residues 161–228 and 240–263; these read GDET…SMRS and YASL…AHHL. Acidic residues predominate over residues 199 to 214; that stretch reads DDNTDEDVEVNSEDEV. Residues 242–251 are compositionally biased toward basic residues; that stretch reads SLKHKPKKRP.

The protein belongs to the DP1 family.

It localises to the endoplasmic reticulum membrane. Microtubule-binding protein required to ensure proper cell division and nuclear envelope reassembly by sequestering the endoplasmic reticulum away from chromosomes during mitosis. Probably acts by clearing the endoplasmic reticulum membrane from metaphase chromosomes. The chain is Receptor expression-enhancing protein 3-A (reep3-a) from Xenopus laevis (African clawed frog).